The sequence spans 350 residues: Probable L-aspartate decarboxylase (350 aa).

Lys206 is subject to N6-(pyridoxal phosphate)lysine.

The protein belongs to the group II decarboxylase family. MfnA subfamily. Pyridoxal 5'-phosphate is required as a cofactor.

It carries out the reaction L-aspartate + H(+) = beta-alanine + CO2. It functions in the pathway cofactor biosynthesis; coenzyme A biosynthesis. In terms of biological role, catalyzes the decarboxylation of L-aspartate to produce beta-alanine. The polypeptide is Probable L-aspartate decarboxylase (Haloarcula marismortui (strain ATCC 43049 / DSM 3752 / JCM 8966 / VKM B-1809) (Halobacterium marismortui)).